Consider the following 360-residue polypeptide: Ferredoxin--NADP reductase (360 aa).

Threonine 25, glutamate 44, glutamine 52, tyrosine 57, valine 97, phenylalanine 132, aspartate 298, and serine 339 together coordinate FAD.

Belongs to the ferredoxin--NADP reductase type 2 family. As to quaternary structure, homodimer. It depends on FAD as a cofactor.

The enzyme catalyses 2 reduced [2Fe-2S]-[ferredoxin] + NADP(+) + H(+) = 2 oxidized [2Fe-2S]-[ferredoxin] + NADPH. The protein is Ferredoxin--NADP reductase of Chlorobaculum tepidum (strain ATCC 49652 / DSM 12025 / NBRC 103806 / TLS) (Chlorobium tepidum).